We begin with the raw amino-acid sequence, 848 residues long: Leucine--tRNA ligase (848 aa).

The segment at 1–21 (MTENTPGTSAPERFDPATADT) is disordered. Positions 51–61 (PYPSGRIHIGH) match the 'HIGH' region motif. Positions 625 to 629 (KMSKS) match the 'KMSKS' region motif. K628 contributes to the ATP binding site.

Belongs to the class-I aminoacyl-tRNA synthetase family.

The protein localises to the cytoplasm. It catalyses the reaction tRNA(Leu) + L-leucine + ATP = L-leucyl-tRNA(Leu) + AMP + diphosphate. The chain is Leucine--tRNA ligase from Novosphingobium aromaticivorans (strain ATCC 700278 / DSM 12444 / CCUG 56034 / CIP 105152 / NBRC 16084 / F199).